Consider the following 276-residue polypeptide: Urease accessory protein UreD (276 aa).

Belongs to the UreD family. As to quaternary structure, ureD, UreF and UreG form a complex that acts as a GTP-hydrolysis-dependent molecular chaperone, activating the urease apoprotein by helping to assemble the nickel containing metallocenter of UreC. The UreE protein probably delivers the nickel.

Its subcellular location is the cytoplasm. Required for maturation of urease via the functional incorporation of the urease nickel metallocenter. In Polaromonas sp. (strain JS666 / ATCC BAA-500), this protein is Urease accessory protein UreD.